A 183-amino-acid polypeptide reads, in one-letter code: CKLF-like MARVEL transmembrane domain-containing protein 6 (183 aa).

At methionine 1 the chain carries N-acetylmethionine. The tract at residues methionine 1–glycine 20 is disordered. The Cytoplasmic portion of the chain corresponds to methionine 1–arginine 39. At serine 8 the chain carries Phosphoserine. Residues arginine 33–arginine 160 form the MARVEL domain. The helical transmembrane segment at valine 40–serine 60 threads the bilayer. Residues glutamine 61–glycine 67 lie on the Extracellular side of the membrane. Residues leucine 68–valine 88 traverse the membrane as a helical segment. The Cytoplasmic portion of the chain corresponds to tyrosine 89 to aspartate 106. Residues phenylalanine 107–threonine 127 form a helical membrane-spanning segment. Residues histidine 128–glutamate 134 lie on the Extracellular side of the membrane. A helical transmembrane segment spans residues isoleucine 135 to methionine 155. Residues leucine 156–alanine 183 lie on the Cytoplasmic side of the membrane. Phosphothreonine is present on threonine 171.

This sequence belongs to the chemokine-like factor family. As to quaternary structure, interacts with PD-L1/CD274 (via transmembrane domain); the interaction is direct. Interacts with CMTM4. Interacts with CD58, ARG1, ENO1 and TMPO.

It localises to the cell membrane. The protein resides in the early endosome membrane. It is found in the recycling endosome membrane. In terms of biological role, master regulator of recycling and plasma membrane expression of PD-L1/CD274, an immune inhibitory ligand critical for immune tolerance to self and antitumor immunity. Associates with both constitutive and IFNG-induced PD-L1/CD274 at recycling endosomes, where it protects PD-L1/CD274 from being targeted for lysosomal degradation, likely by preventing its ubiquitination. May stabilize PD-L1/CD274 expression on antigen presenting cells and potentiates inhibitory signaling by PDCD1/CD279, its receptor on T-cells, ultimately triggering T-cell anergy. This Pongo abelii (Sumatran orangutan) protein is CKLF-like MARVEL transmembrane domain-containing protein 6 (CMTM6).